A 449-amino-acid polypeptide reads, in one-letter code: Elongation factor 1-alpha 1 (449 aa).

The tr-type G domain occupies 5–230 (KVHMNLVVVG…DMLEPPVRPS (226 aa)). A G1 region spans residues 14-21 (GHVDAGKS). 14–21 (GHVDAGKS) contacts GTP. The interval 70-74 (GITID) is G2. A G3 region spans residues 91-94 (DAPG). GTP-binding positions include 91 to 95 (DAPGH) and 153 to 156 (NKMD). A G4 region spans residues 153 to 156 (NKMD). Residues 194-196 (SGW) are G5. Position 362 is a 5-glutamyl glycerylphosphorylethanolamine (glutamate 362).

It belongs to the TRAFAC class translation factor GTPase superfamily. Classic translation factor GTPase family. EF-Tu/EF-1A subfamily. In terms of processing, phosphatidylethanolamine (PE) is a direct precursor of the ethanolamine-phosphoglycerol (EPG) moiety.

It is found in the cytoplasm. In terms of biological role, this protein promotes the GTP-dependent binding of aminoacyl-tRNA to the A-site of ribosomes during protein biosynthesis. This Trypanosoma brucei brucei (strain 927/4 GUTat10.1) protein is Elongation factor 1-alpha 1 (TEF1).